The chain runs to 349 residues: MGNPRSPLDRRLRFRNVPFLPPRIAASSTTTARSLKAKTMEMRFTIAWMWFPSVLLILGLLTPPSNGCTVDVGRNVSIREQCRLRNGATFSKGDIEGNFSGPVVVELDYEDIDITGERQRLRFHLSGLGCPTKENIRKDNESDVNGGIRWALYIQTGDAKYGIRNQHLSIRLMYPGEKNTQQLLGSDFSCERHRRPSTPLGKNAEVPPATRTSSTYGVLSAFVVWIGSGLNIIWWTGIVLLAADALGLGERWLRLALSHRDKHHASRTAALQCQRDMLLRQRRRARRLHAVSEGKLQEEKKRQSALVWNVEARPFPSTHQLIVLPPPVASAPPAVPSQPPEYSSVFPPV.

A helical membrane pass occupies residues 221–241 (AFVVWIGSGLNIIWWTGIVLL). The span at 328–339 (VASAPPAVPSQP) shows a compositional bias: pro residues. Positions 328-349 (VASAPPAVPSQPPEYSSVFPPV) are disordered.

The protein resides in the host membrane. This is an uncharacterized protein from Human cytomegalovirus (strain Merlin) (HHV-5).